A 670-amino-acid chain; its full sequence is uncharacterized protein (670 aa).

The next 10 membrane-spanning stretches (helical) occupy residues 23–42, 47–69, 76–98, 118–140, 153–170, 381–403, 410–432, 437–454, 461–483, and 493–510; these read YALRNTIAMCLALTVAYYLN, YWAMTSAAVVSFPTVGGVISKSL, LLGAIAALLLAGHTLNEPWFFLL, VAYAFQLAGYTAAIIAFPMVNIT, VCEVIVGILCGGMMMMIL, QWDAGANALTLAAISCVLYSAVA, SLLMRTLVLLSLFSFVVKFGLMV, LWQFLLFLFPLLATMQLL, FAALWGQLIVFMGSFIAVTNPPV, and NLAKIVGVALAWLAFAIL.

The protein belongs to the aromatic acid exporter ArAE (TC 2.A.85) family.

It is found in the cell membrane. This is an uncharacterized protein from Escherichia coli O157:H7.